We begin with the raw amino-acid sequence, 142 residues long: Fluoride-specific ion channel FluC 1 (142 aa).

The next 4 membrane-spanning stretches (helical) occupy residues Ala17–Leu37, Gly42–Ala62, Phe80–Phe100, and Tyr109–Gly129. Positions 87 and 90 each coordinate Na(+).

It belongs to the fluoride channel Fluc/FEX (TC 1.A.43) family.

The protein localises to the cell inner membrane. It carries out the reaction fluoride(in) = fluoride(out). Na(+) is not transported, but it plays an essential structural role and its presence is essential for fluoride channel function. Functionally, fluoride-specific ion channel. Important for reducing fluoride concentration in the cell, thus reducing its toxicity. In Bradyrhizobium diazoefficiens (strain JCM 10833 / BCRC 13528 / IAM 13628 / NBRC 14792 / USDA 110), this protein is Fluoride-specific ion channel FluC 1.